We begin with the raw amino-acid sequence, 434 residues long: Mothers against decapentaplegic homolog 9 (434 aa).

Positions 16–140 (PAVKRLLGWK…YRRVETPVLP (125 aa)) constitute an MH1 domain. The Zn(2+) site is built by Cys-68, Cys-113, Cys-125, and His-130. Residues 171–222 (MPHNATYPDSFQQSLGPAPPSSPGHVFPQSPCPTSYPQSPGSPSESDSPYQH) form a disordered region. Residues 202 to 221 (CPTSYPQSPGSPSESDSPYQ) show a composition bias toward polar residues. The MH2 domain occupies 236–434 (WCSVAYYELN…SPHNPISSVS (199 aa)).

Belongs to the dwarfin/SMAD family. Interaction with the co-SMAD SMAD4. Interacts with PEBP2-alpha subunit. Interacts with RANBP3L. Phosphorylated on serine by BMP (bone morphogenetic proteins) type 1 receptor kinase. Phosphorylated by activin type I receptor-like kinase-2 (ALK-2).

It localises to the cytoplasm. It is found in the nucleus. Its function is as follows. Transcriptional modulator activated by BMP (bone morphogenetic proteins) type 1 receptor kinase. SMAD9 is a receptor-regulated SMAD (R-SMAD). Has been shown to be activated by activin type I receptor-like kinase-2 (ALK-2) which stimulates heteromerization between SMAD9 and SMAD4. ALK-2 binds TGF-beta, activin and BMP. The sequence is that of Mothers against decapentaplegic homolog 9 (Smad9) from Rattus norvegicus (Rat).